The following is a 534-amino-acid chain: Monolignol oxidoreductase AtBBE-like 13 (534 aa).

The N-terminal stretch at 1–29 (MAFVLMNNTNAFLVTLLLLSLSYIPLSFS) is a signal peptide. 2 N-linked (GlcNAc...) asparagine glycosylation sites follow: asparagine 7 and asparagine 59. A disulfide bridge connects residues cysteine 38 and cysteine 102. The 6-(S-cysteinyl)-8alpha-(pros-histidyl)-FAD (His-Cys) cross-link spans 117 to 181 (HDYEGLSYVS…KIHGFPAGLC (65 aa)).

The protein belongs to the oxygen-dependent FAD-linked oxidoreductase family. FAD serves as cofactor. Post-translationally, the FAD cofactor is bound via a bicovalent 6-S-cysteinyl, 8alpha-N1-histidyl FAD linkage.

The protein localises to the secreted. Its subcellular location is the cell wall. The enzyme catalyses (E)-4-coumaroyl alcohol + A = (E)-4-coumaraldehyde + AH2. It catalyses the reaction (E)-coniferol + A = (E)-coniferaldehyde + AH2. It carries out the reaction (E)-sinapyl alcohol + A = (E)-sinapaldehyde + AH2. It functions in the pathway phenylpropanoid metabolism. Its function is as follows. Mediates oxidation of p-hydroxylated derivatives of cinnamyl alcohol (i.e. the monolignols p-coumaryl-, coniferyl-, and sinapyl alcohol) to their corresponding aldehydes. The electron acceptor required for these reactions is not known, but does not seem to be dioxygen. Is much less efficient towards cinnamyl alcohol. The protein is Monolignol oxidoreductase AtBBE-like 13 of Arabidopsis thaliana (Mouse-ear cress).